Here is a 43-residue protein sequence, read N- to C-terminus: Alpha-1-antiproteinase 4 (43 aa).

It belongs to the serpin family. Post-translationally, N-glycosylated with carbohydrates having biantennary side chains. As to expression, plasma.

It is found in the secreted. The protein is Alpha-1-antiproteinase 4 of Equus caballus (Horse).